The primary structure comprises 505 residues: Cytochrome P450 71A2 (505 aa).

Residues 7–27 form a helical membrane-spanning segment; that stretch reads WYSLLIPLFVFIFLLIHHCFF. Residue Cys448 coordinates heme.

Belongs to the cytochrome P450 family. Heme serves as cofactor.

The protein localises to the membrane. Functionally, may have a role in maturation, such as during flavor formation or other metabolite production specific to aging tissues. This is Cytochrome P450 71A2 (CYP71A2) from Solanum melongena (Eggplant).